We begin with the raw amino-acid sequence, 275 residues long: NH(3)-dependent NAD(+) synthetase (275 aa).

50 to 57 (GISGGVDS) serves as a coordination point for ATP. Aspartate 56 provides a ligand contact to Mg(2+). Residue arginine 147 coordinates deamido-NAD(+). Threonine 167 contributes to the ATP binding site. A Mg(2+)-binding site is contributed by glutamate 172. Positions 180 and 187 each coordinate deamido-NAD(+). Residues lysine 196 and threonine 218 each contribute to the ATP site. Residue 267 to 268 (HK) participates in deamido-NAD(+) binding.

This sequence belongs to the NAD synthetase family. Homodimer.

The enzyme catalyses deamido-NAD(+) + NH4(+) + ATP = AMP + diphosphate + NAD(+) + H(+). Its pathway is cofactor biosynthesis; NAD(+) biosynthesis; NAD(+) from deamido-NAD(+) (ammonia route): step 1/1. Functionally, catalyzes the ATP-dependent amidation of deamido-NAD to form NAD. Uses ammonia as a nitrogen source. The sequence is that of NH(3)-dependent NAD(+) synthetase from Pseudomonas putida (strain GB-1).